A 376-amino-acid chain; its full sequence is Chaperone protein DnaJ (376 aa).

The 65-residue stretch at 5–69 (DYYEVLGISK…QKRAQYDQYG (65 aa)) folds into the J domain. The CR-type zinc-finger motif lies at 133–215 (GKDAEIEIPR…CHGKGRVTKT (83 aa)). Zn(2+) contacts are provided by Cys-146, Cys-149, Cys-163, Cys-166, Cys-189, Cys-192, Cys-203, and Cys-206. CXXCXGXG motif repeat units follow at residues 146 to 153 (CDTCHGSG), 163 to 170 (CSHCGGKG), 189 to 196 (CQYCNGTG), and 203 to 210 (CSTCHGKG).

This sequence belongs to the DnaJ family. As to quaternary structure, homodimer. Requires Zn(2+) as cofactor.

Its subcellular location is the cytoplasm. Functionally, participates actively in the response to hyperosmotic and heat shock by preventing the aggregation of stress-denatured proteins and by disaggregating proteins, also in an autonomous, DnaK-independent fashion. Unfolded proteins bind initially to DnaJ; upon interaction with the DnaJ-bound protein, DnaK hydrolyzes its bound ATP, resulting in the formation of a stable complex. GrpE releases ADP from DnaK; ATP binding to DnaK triggers the release of the substrate protein, thus completing the reaction cycle. Several rounds of ATP-dependent interactions between DnaJ, DnaK and GrpE are required for fully efficient folding. Also involved, together with DnaK and GrpE, in the DNA replication of plasmids through activation of initiation proteins. The polypeptide is Chaperone protein DnaJ (Listeria welshimeri serovar 6b (strain ATCC 35897 / DSM 20650 / CCUG 15529 / CIP 8149 / NCTC 11857 / SLCC 5334 / V8)).